Reading from the N-terminus, the 453-residue chain is Sialic acid-binding Ig-like lectin 6 (453 aa).

Positions 1–26 are cleaved as a signal peptide; that stretch reads MQGAQEASASEMLPLLLPLLWAGALA. Residues 27–347 lie on the Extracellular side of the membrane; that stretch reads QERRFQLEGP…WKPEGRAGGV (321 aa). In terms of domain architecture, Ig-like V-type spans 28 to 123; sequence ERRFQLEGPE…RDNAAYFFRL (96 aa). Intrachain disulfides connect cysteine 46/cysteine 172, cysteine 51/cysteine 104, and cysteine 166/cysteine 215. Asparagine 103 carries an N-linked (GlcNAc...) asparagine glycan. Residue arginine 122 participates in N-acetylneuraminate binding. Positions 148–231 constitute an Ig-like C2-type 1 domain; the sequence is PNISIPGTLE…AGVTMERTIQ (84 aa). 2 N-linked (GlcNAc...) asparagine glycosylation sites follow: asparagine 149 and asparagine 163. The N-linked (GlcNAc...) asparagine glycan is linked to asparagine 233. The 96-residue stretch at 238-333 folds into the Ig-like C2-type 2 domain; the sequence is PQKVAISIFQ…PLGSLQISLS (96 aa). A disulfide bridge links cysteine 274 with cysteine 319. A helical membrane pass occupies residues 348-368; the sequence is LGAVWGASITTLVFLCVCFIF. The Cytoplasmic segment spans residues 369–453; that stretch reads RVKTRRKKAA…TEYSEIKIHK (85 aa). The ITIM motif motif lies at 424–429; sequence LHYAVL. An SLAM-like motif motif is present at residues 444–449; that stretch reads TEYSEI.

This sequence belongs to the immunoglobulin superfamily. SIGLEC (sialic acid binding Ig-like lectin) family. In terms of assembly, interacts with LEP. In terms of tissue distribution, expressed at high levels in placenta (cyto- and syncytiotrophoblastic cells) and at lower levels in spleen, peripheral blood leukocytes (predominantly B-cells) and small intestine.

The protein localises to the cell membrane. Its subcellular location is the secreted. In terms of biological role, putative adhesion molecule that mediates sialic-acid dependent binding to cells. Binds to alpha-2,6-linked sialic acid. The sialic acid recognition site may be masked by cis interactions with sialic acids on the same cell surface. The protein is Sialic acid-binding Ig-like lectin 6 (SIGLEC6) of Homo sapiens (Human).